The following is a 547-amino-acid chain: Chaperonin GroEL (547 aa).

ATP-binding positions include Thr30–Pro33, Lys51, Asp87–Thr91, Gly415, and Asp496. A disordered region spans residues Ser527–Phe547. Gly residues predominate over residues Gly537–Phe547.

It belongs to the chaperonin (HSP60) family. Forms a cylinder of 14 subunits composed of two heptameric rings stacked back-to-back. Interacts with the co-chaperonin GroES.

It is found in the cytoplasm. The enzyme catalyses ATP + H2O + a folded polypeptide = ADP + phosphate + an unfolded polypeptide.. Together with its co-chaperonin GroES, plays an essential role in assisting protein folding. The GroEL-GroES system forms a nano-cage that allows encapsulation of the non-native substrate proteins and provides a physical environment optimized to promote and accelerate protein folding. This is Chaperonin GroEL from Rickettsia rickettsii (strain Sheila Smith).